Consider the following 169-residue polypeptide: Peptide deformylase (169 aa).

The Fe cation site is built by Cys91 and His133. Glu134 is a catalytic residue. His137 lines the Fe cation pocket.

It belongs to the polypeptide deformylase family. It depends on Fe(2+) as a cofactor.

The catalysed reaction is N-terminal N-formyl-L-methionyl-[peptide] + H2O = N-terminal L-methionyl-[peptide] + formate. Removes the formyl group from the N-terminal Met of newly synthesized proteins. Requires at least a dipeptide for an efficient rate of reaction. N-terminal L-methionine is a prerequisite for activity but the enzyme has broad specificity at other positions. The sequence is that of Peptide deformylase from Enterobacter sp. (strain 638).